Reading from the N-terminus, the 701-residue chain is Octapeptide-repeat antigen (701 aa).

N-linked (GlcNAc...) asparagine glycosylation is found at Asn40, Asn41, Asn76, Asn111, Asn127, Asn139, Asn181, Asn189, Asn311, Asn334, Asn344, Asn477, and Asn557. Positions 120-140 (IENEEKSNGSRKSSNKQKYNE) are disordered. The segment at 641-701 (LSGSSTGSMN…IKSGSKDHIK (61 aa)) is disordered. The segment covering 642-655 (SGSSTGSMNNGKSG) has biased composition (low complexity). Repeat copies occupy residues 653–660 (KSGSKSDI), 661–668 (KGGSKDDI), 669–676 (KSGSKDDI), 677–684 (KSGSKADI), 685–692 (KSGSKDDI), and 693–700 (KSGSKDHI). The segment at 653–700 (KSGSKSDIKGGSKDDIKSGSKDDIKSGSKADIKSGSKDDIKSGSKDHI) is 6 X 8 AA approximate tandem repeats. Positions 656–701 (SKSDIKGGSKDDIKSGSKDDIKSGSKADIKSGSKDDIKSGSKDHIK) are enriched in basic and acidic residues.

The protein belongs to the ATP-dependent AMP-binding enzyme family.

The protein localises to the parasitophorous vacuole. This Plasmodium falciparum (isolate NF7 / Ghana) protein is Octapeptide-repeat antigen.